Consider the following 204-residue polypeptide: Large ribosomal subunit protein eL15 (204 aa).

This sequence belongs to the eukaryotic ribosomal protein eL15 family.

The polypeptide is Large ribosomal subunit protein eL15 (RpL15) (Chironomus tentans (Midge)).